The sequence spans 117 residues: Translation initiation factor 1A (117 aa).

Positions 17-92 (IRVPLPDRSK…ERGDIVYRYT (76 aa)) constitute an S1-like domain.

It belongs to the eIF-1A family.

Seems to be required for maximal rate of protein biosynthesis. Enhances ribosome dissociation into subunits and stabilizes the binding of the initiator Met-tRNA(I) to 40 S ribosomal subunits. The sequence is that of Translation initiation factor 1A from Thermococcus kodakarensis (strain ATCC BAA-918 / JCM 12380 / KOD1) (Pyrococcus kodakaraensis (strain KOD1)).